The primary structure comprises 372 residues: 4-hydroxy-3-methylbut-2-en-1-yl diphosphate synthase (flavodoxin) (372 aa).

C270, C273, C305, and E312 together coordinate [4Fe-4S] cluster.

Belongs to the IspG family. It depends on [4Fe-4S] cluster as a cofactor.

It catalyses the reaction (2E)-4-hydroxy-3-methylbut-2-enyl diphosphate + oxidized [flavodoxin] + H2O + 2 H(+) = 2-C-methyl-D-erythritol 2,4-cyclic diphosphate + reduced [flavodoxin]. It participates in isoprenoid biosynthesis; isopentenyl diphosphate biosynthesis via DXP pathway; isopentenyl diphosphate from 1-deoxy-D-xylulose 5-phosphate: step 5/6. Converts 2C-methyl-D-erythritol 2,4-cyclodiphosphate (ME-2,4cPP) into 1-hydroxy-2-methyl-2-(E)-butenyl 4-diphosphate. This Salmonella paratyphi B (strain ATCC BAA-1250 / SPB7) protein is 4-hydroxy-3-methylbut-2-en-1-yl diphosphate synthase (flavodoxin).